The primary structure comprises 294 residues: tRNA-cytidine(32) 2-sulfurtransferase (294 aa).

Residues 70–75 (SGGKDS) carry the PP-loop motif motif. 3 residues coordinate [4Fe-4S] cluster: Cys-145, Cys-148, and Cys-236.

Belongs to the TtcA family. As to quaternary structure, homodimer. It depends on Mg(2+) as a cofactor. Requires [4Fe-4S] cluster as cofactor.

Its subcellular location is the cytoplasm. The enzyme catalyses cytidine(32) in tRNA + S-sulfanyl-L-cysteinyl-[cysteine desulfurase] + AH2 + ATP = 2-thiocytidine(32) in tRNA + L-cysteinyl-[cysteine desulfurase] + A + AMP + diphosphate + H(+). The protein operates within tRNA modification. Catalyzes the ATP-dependent 2-thiolation of cytidine in position 32 of tRNA, to form 2-thiocytidine (s(2)C32). The sulfur atoms are provided by the cysteine/cysteine desulfurase (IscS) system. The chain is tRNA-cytidine(32) 2-sulfurtransferase from Rhizobium meliloti (strain 1021) (Ensifer meliloti).